Reading from the N-terminus, the 194-residue chain is uncharacterized protein (194 aa).

The region spanning 6-66 is the HTH tetR-type domain; the sequence is EFDTALVLHR…SAVKSYLEGK (61 aa). A DNA-binding region (H-T-H motif) is located at residues 29–48; it reads SLQDLLSHLGIARQSLYDTY.

This is an uncharacterized protein from Bacillus subtilis (strain 168).